The sequence spans 98 residues: NADH-ubiquinone oxidoreductase chain 4L (98 aa).

3 consecutive transmembrane segments (helical) span residues 1-21 (MPYI…GTLM), 29-49 (SLLC…LLSL), and 61-81 (LILL…LIMI).

The protein belongs to the complex I subunit 4L family. In terms of assembly, core subunit of respiratory chain NADH dehydrogenase (Complex I) which is composed of 45 different subunits.

It localises to the mitochondrion inner membrane. The catalysed reaction is a ubiquinone + NADH + 5 H(+)(in) = a ubiquinol + NAD(+) + 4 H(+)(out). In terms of biological role, core subunit of the mitochondrial membrane respiratory chain NADH dehydrogenase (Complex I) which catalyzes electron transfer from NADH through the respiratory chain, using ubiquinone as an electron acceptor. Part of the enzyme membrane arm which is embedded in the lipid bilayer and involved in proton translocation. The polypeptide is NADH-ubiquinone oxidoreductase chain 4L (MT-ND4L) (Mammuthus primigenius (Siberian woolly mammoth)).